The chain runs to 352 residues: C-C chemokine receptor type 5 (352 aa).

Topologically, residues 1 to 30 are extracellular; that stretch reads MDYQVSSPTYDIDYYTSEPCQKVNVKQIAA. Position 3 is a sulfotyrosine (tyrosine 3). Residues serine 6 and serine 7 are each glycosylated (O-linked (GalNAc...) serine). Tyrosine 10, tyrosine 14, and tyrosine 15 each carry sulfotyrosine. 2 disulfide bridges follow: cysteine 20–cysteine 269 and cysteine 101–cysteine 178. A helical membrane pass occupies residues 31–58; it reads RLLPPLYSLVFIFGFVGNILVVLILINC. Residues 59–68 are Cytoplasmic-facing; sequence KRLKSMTDIY. Residues 69 to 89 traverse the membrane as a helical segment; it reads LLNLAISDLFFLLTVPFWAHY. Residues 90–102 are Extracellular-facing; sequence AAAQWDFGNTMCQ. A helical membrane pass occupies residues 103-124; the sequence is LLTGLYFIGFFSGIFFIILLTI. The Cytoplasmic segment spans residues 125–141; it reads DRYLAIVHAVFALKART. A helical membrane pass occupies residues 142 to 166; it reads VTFGVVTSVITWVVAVFASLPGIIF. The Extracellular portion of the chain corresponds to 167–198; sequence TRSQREGLHYTCSSHFPYSQYQFWKNFQTLKI. The chain crosses the membrane as a helical span at residues 199-218; the sequence is VILGLVLPLLIMVICYSGIL. The Cytoplasmic segment spans residues 219-235; it reads KTLLRCRNEKKRHRAVR. Residues 236–260 form a helical membrane-spanning segment; it reads LIFTIMIVYFLFWAPYNIVLLLNTF. Topologically, residues 261 to 277 are extracellular; the sequence is QEFFGLNNCSSSNRLDQ. The helical transmembrane segment at 278–301 threads the bilayer; the sequence is AMQVTETLGMTHCCINPIIYAFVG. At 302–352 the chain is on the cytoplasmic side; the sequence is EKFRNYLLVFFQKHIAKRFCKCCSIFQQEAPERASSVYTRSTGEHEISVGL. 3 S-palmitoyl cysteine lipidation sites follow: cysteine 321, cysteine 323, and cysteine 324. Phosphoserine; by BARK1 occurs at positions 336, 337, 342, and 349.

Belongs to the G-protein coupled receptor 1 family. In terms of assembly, interacts with PRAF2. Efficient ligand binding to CCL3/MIP-1alpha and CCL4/MIP-1beta requires sulfation, O-glycosylation and sialic acid modifications. Glycosylation on Ser-6 is required for efficient binding of CCL4. Interacts with GRK2. Interacts with ARRB1 and ARRB2. Interacts with CNIH4. Interacts with S100A4; this interaction stimulates T-lymphocyte chemotaxis. In terms of processing, sulfated on at least 2 of the N-terminal tyrosines. Sulfation is required for efficient binding of the chemokines, CCL3 and CCL4. Post-translationally, palmitoylation in the C-terminal is important for cell surface expression. Phosphorylation on serine residues in the C-terminal is stimulated by binding CC chemokines especially by APO-RANTES. In terms of processing, O-glycosylated, but not N-glycosylated. Ser-6 appears to be the major site even if Ser-7 may be also O-glycosylated. Also sialylated glycans present which contribute to chemokine binding. Thr-16 and Ser-17 may also be glycosylated and, if so, with small moieties such as a T-antigen.

The protein resides in the cell membrane. In terms of biological role, receptor for a number of inflammatory CC-chemokines including CCL3/MIP-1-alpha, CCL4/MIP-1-beta and RANTES and subsequently transduces a signal by increasing the intracellular calcium ion level. May play a role in the control of granulocytic lineage proliferation or differentiation. Participates in T-lymphocyte migration to the infection site by acting as a chemotactic receptor. This Pygathrix nemaeus (Red-shanked douc langur) protein is C-C chemokine receptor type 5 (CCR5).